Consider the following 498-residue polypeptide: MRINPTTSGPGVSTLEKKNLGRIAQIIGPVLDVAFPPGKMPNIYNALVVKGRDTVGQQINVTCEVQQLLGNNRVRAVAMSATDGLMRGMEVIDTGAPLSVPVGGATLGRIFNVLGEPVDNLGPVDTRTTSPIHRSAPAFIQLDTKLSIFETGIKVVDLLAPYRRGGKIGLFGGAGVGKTVLIMELINNIAKAHGGVSVFGGVGERTREGNDLYMEMKESGVINEQNIAESKVALVHGQMNEPPGARMRVGLTALTMAEYFRDVNEQDVLLFIDNIFRFVQAGSEVSALLGRMPSAVGYQPTLSTEMGSLQERITSTKEGSITSIQAVYVPADDLTDPAPATTFAHLDATTVLSRGLAAKGIYPAVDPLDSTSTMLQPRIVGEEHYETAQRVKQTSQRYKELQDIIAILGLDELSEEDRLTVARARKIERFLSQPFFVAEVFTGSPGKYVGLTETIRGFQLILSGELDGLPEQAFYLVGNIDEATAKAMNLEVESNLKK.

172–179 (GGAGVGKT) provides a ligand contact to ATP.

This sequence belongs to the ATPase alpha/beta chains family. F-type ATPases have 2 components, CF(1) - the catalytic core - and CF(0) - the membrane proton channel. CF(1) has five subunits: alpha(3), beta(3), gamma(1), delta(1), epsilon(1). CF(0) has four main subunits: a(1), b(1), b'(1) and c(9-12).

The protein localises to the plastid. It is found in the chloroplast thylakoid membrane. The enzyme catalyses ATP + H2O + 4 H(+)(in) = ADP + phosphate + 5 H(+)(out). In terms of biological role, produces ATP from ADP in the presence of a proton gradient across the membrane. The catalytic sites are hosted primarily by the beta subunits. This chain is ATP synthase subunit beta, chloroplastic, found in Cinnamomum camphora (Camphor tree).